The chain runs to 234 residues: Filarial antigen Av33 (234 aa).

Residues 1 to 17 form the signal peptide; that stretch reads MKILSCLLLCTITVLEG. A disulfide bridge connects residues Cys135 and Cys230. The disordered stretch occupies residues 204 to 234; sequence TSQASEATTIPTTTQTPVEAPETPSFCVPIY. Residues 211-220 are compositionally biased toward low complexity; that stretch reads TTIPTTTQTP.

Belongs to the protease inhibitor I33 family.

It localises to the secreted. Aspartyl protease inhibitor. The polypeptide is Filarial antigen Av33 (Acanthocheilonema viteae (Filarial nematode worm)).